A 365-amino-acid polypeptide reads, in one-letter code: Flagellar P-ring protein (365 aa).

Residues 1 to 19 form the signal peptide; it reads MIKFLSALILLLVTTAAQA.

This sequence belongs to the FlgI family. In terms of assembly, the basal body constitutes a major portion of the flagellar organelle and consists of four rings (L,P,S, and M) mounted on a central rod.

The protein resides in the periplasm. The protein localises to the bacterial flagellum basal body. Functionally, assembles around the rod to form the L-ring and probably protects the motor/basal body from shearing forces during rotation. In Shigella dysenteriae serotype 1 (strain Sd197), this protein is Flagellar P-ring protein.